The chain runs to 158 residues: Low molecular weight phosphotyrosine protein phosphatase (158 aa).

Residue alanine 2 is modified to N-acetylalanine. The Nucleophile role is filled by cysteine 13. Residue arginine 19 is part of the active site. Aspartate 130 acts as the Proton donor in catalysis. Phosphotyrosine occurs at positions 132 and 133.

This sequence belongs to the low molecular weight phosphotyrosine protein phosphatase family. Interacts with EPHA2; dephosphorylates EPHA2. Interacts with EPHB1. As to quaternary structure, interacts with the SH3 domain of SPTAN1. There is no interaction observed for isoform 2. Post-translationally, phosphorylated by LCK. Phosphorylation at Tyr-132 increases its phosphatase activity. Widely expressed with highest levels in brain and liver and lowest levels in muscle.

It is found in the cytoplasm. The enzyme catalyses O-phospho-L-tyrosyl-[protein] + H2O = L-tyrosyl-[protein] + phosphate. The catalysed reaction is a phosphate monoester + H2O = an alcohol + phosphate. Its activity is regulated as follows. Inhibited by sulfhydryl reagents. Acts on tyrosine phosphorylated proteins, low-MW aryl phosphates and natural and synthetic acyl phosphates with differences in substrate specificity between isoform 1 and isoform 2. This Mus musculus (Mouse) protein is Low molecular weight phosphotyrosine protein phosphatase.